A 163-amino-acid polypeptide reads, in one-letter code: Mitochondrial import inner membrane translocase subunit TIM14 (163 aa).

At methionine 1 to proline 60 the chain is on the mitochondrial intermembrane side. A helical membrane pass occupies residues valine 61–tyrosine 78. Residues lysine 79–lysine 163 are Mitochondrial matrix-facing. The J domain occupies glutamate 107–lysine 163.

It belongs to the TIM14 family. Heterodimer with PAM16. Component of the PAM complex, at least composed of mtHsp70, MGE1, TIM44, PAM16, PAM17 and PAM18.

It localises to the mitochondrion inner membrane. In terms of biological role, essential component of the PAM complex, a complex required for the translocation of transit peptide-containing proteins from the inner membrane into the mitochondrial matrix in an ATP-dependent manner. In the complex, it is required to stimulate activity of mtHSP70 (SSC1). The sequence is that of Mitochondrial import inner membrane translocase subunit TIM14 (PAM18) from Kluyveromyces lactis (strain ATCC 8585 / CBS 2359 / DSM 70799 / NBRC 1267 / NRRL Y-1140 / WM37) (Yeast).